The primary structure comprises 668 residues: Packaging protein UL32 homolog (668 aa).

Over residues 1 to 10 (MNPSTHVSSN) the composition is skewed to polar residues. Positions 1 to 35 (MNPSTHVSSNGPTTPPHGPHTTFLPPTSPAPSTSS) are disordered. The segment covering 19–35 (PHTTFLPPTSPAPSTSS) has biased composition (low complexity). 4 residues coordinate Zn(2+): Cys-200, Cys-203, His-276, and Cys-282. Residues 200 to 282 (CNLCAIISIC…FHLHFFINRC (83 aa)) form a zinc finger 1 region. 2 stretches are compositionally biased toward basic and acidic residues: residues 392 to 401 (SEREDARMMM) and 410 to 419 (GEKGGDDPGR). Residues 392–430 (SEREDARMMMEEEEDEEGGEKGGDDPGRHNGGGTSGGFS) are disordered. Residues Cys-459, Cys-462, His-567, and Cys-574 each contribute to the Zn(2+) site. The tract at residues 459–574 (CLLCELMACS…YKHFFCDPQC (116 aa)) is zinc finger 2.

The protein belongs to the herpesviridae UL32 protein family.

Its subcellular location is the host cytoplasm. The protein localises to the host nucleus. Plays a role in efficient localization of neo-synthesized capsids to nuclear replication compartments, thereby controlling cleavage and packaging of virus genomic DNA. The sequence is that of Packaging protein UL32 homolog (UL52) from Homo sapiens (Human).